Reading from the N-terminus, the 275-residue chain is Undecaprenyl-diphosphatase (275 aa).

Transmembrane regions (helical) follow at residues 1-21, 42-62, 80-100, 107-127, 147-167, 184-204, 214-234, and 249-269; these read MDWV…FLPI, VKDA…LVYY, TLWT…LAFG, LFKP…MWLI, SLLI…SRSA, TKFS…LNLV, IGLL…YLAI, and FAVY…TGVM.

The protein belongs to the UppP family.

It localises to the cell membrane. It carries out the reaction di-trans,octa-cis-undecaprenyl diphosphate + H2O = di-trans,octa-cis-undecaprenyl phosphate + phosphate + H(+). Functionally, catalyzes the dephosphorylation of undecaprenyl diphosphate (UPP). Confers resistance to bacitracin. The sequence is that of Undecaprenyl-diphosphatase from Deinococcus deserti (strain DSM 17065 / CIP 109153 / LMG 22923 / VCD115).